Consider the following 503-residue polypeptide: Depupylase (503 aa).

Residues E8 and Y92 each coordinate Mg(2+). The active-site Proton acceptor is the D94. E99 lines the Mg(2+) pocket. Residue 101 to 102 (ST) coordinates ATP. Residue H155 participates in Mg(2+) binding. N157 and R239 together coordinate ATP. H241 contacts Mg(2+).

This sequence belongs to the Pup ligase/Pup deamidase family. Pup deamidase subfamily. In terms of assembly, likely interacts with the C-terminal half of the prokaryotic ubiquitin-like protein Pup. The cofactor is ATP.

It participates in protein degradation; proteasomal Pup-dependent pathway. In terms of biological role, displays depupylase (DPUP) activity, removing conjugated Pup from target proteins; is thus involved in the recycling of Pup and may function similarly to deubiquitinases (DUBs) in eukaryotes to prevent or promote proteasomal degradation of certain proteins. Is also able to catalyze the deamidation of the C-terminal glutamine to glutamate in a variant of the prokaryotic ubiquitin-like protein Pup; however, since Pup from A.cellulolyticus possesses a C-terminal glutamate, this deamidase activity may be of no significance in vivo. The protein is Depupylase (dop) of Acidothermus cellulolyticus (strain ATCC 43068 / DSM 8971 / 11B).